The sequence spans 513 residues: Ankyrin repeat-containing protein YIL001W (513 aa).

2 ANK repeats span residues Lys8–Ser37 and Phe41–Arg70. BTB domains follow at residues Arg122–Tyr179 and Pro274–Trp360.

The polypeptide is Ankyrin repeat-containing protein YIL001W (Saccharomyces cerevisiae (strain ATCC 204508 / S288c) (Baker's yeast)).